The following is a 718-amino-acid chain: Putative methyltransferase NSUN7 (718 aa).

The Nucleophile role is filled by Cys-439. Disordered regions lie at residues 536–557 (GKSS…KGAT), 578–616 (ANLS…PAVP), and 694–718 (SLSR…RRWL). The span at 538 to 549 (SSKREKKKKKSK) shows a compositional bias: basic residues. Polar residues predominate over residues 591–604 (QKNTAQVGASSQTR). Basic and acidic residues predominate over residues 696–706 (SRKEEKPKDDT).

This sequence belongs to the class I-like SAM-binding methyltransferase superfamily. RsmB/NOP family.

In terms of biological role, may have S-adenosyl-L-methionine-dependent methyl-transferase activity. In Homo sapiens (Human), this protein is Putative methyltransferase NSUN7 (NSUN7).